The sequence spans 675 residues: Transmembrane protein 232 (675 aa).

The helical transmembrane segment at L163–L183 threads the bilayer. The stretch at W598–Q634 forms a coiled coil. The tract at residues R605–E624 is disordered.

High expression in the testis and weak expression levels in the spleen, liver, brain, uterus, lung, epididymis and kidney. Not detected in the heart or ovary.

The protein localises to the membrane. In terms of biological role, plays a critical role for male fertility and sperm motility by regulating sperm cytoplasm removal and maintaining axoneme integrity. The polypeptide is Transmembrane protein 232 (Tmem232) (Mus musculus (Mouse)).